The primary structure comprises 176 residues: Mediator of RNA polymerase II transcription subunit 11 (176 aa).

Residues 98 to 176 (SRVRELEETK…MGGDSSMSTN (79 aa)) form a disordered region. Positions 99 to 108 (RVRELEETKA) are enriched in basic and acidic residues. Over residues 124–154 (HAAAQQQQQQQQQQQQQQQQMQQAAQQQQQQ) the composition is skewed to low complexity.

Belongs to the Mediator complex subunit 11 family. In terms of assembly, component of the Mediator complex, which may include CDK8, MED4, MED6, MED11, MED14, MED17, MED18, MED20, MED21, MED22, MED27, MED28, MED30 and MED31.

It is found in the nucleus. Component of the Mediator complex, a coactivator involved in the regulated transcription of nearly all RNA polymerase II-dependent genes. Mediator functions as a bridge to convey information from gene-specific regulatory proteins to the basal RNA polymerase II transcription machinery. Mediator is recruited to promoters by direct interactions with regulatory proteins and serves as a scaffold for the assembly of a functional pre-initiation complex with RNA polymerase II and the general transcription factors. This Drosophila melanogaster (Fruit fly) protein is Mediator of RNA polymerase II transcription subunit 11 (MED11).